Reading from the N-terminus, the 195-residue chain is Imidazoleglycerol-phosphate dehydratase (195 aa).

This sequence belongs to the imidazoleglycerol-phosphate dehydratase family.

The protein localises to the cytoplasm. The enzyme catalyses D-erythro-1-(imidazol-4-yl)glycerol 3-phosphate = 3-(imidazol-4-yl)-2-oxopropyl phosphate + H2O. Its pathway is amino-acid biosynthesis; L-histidine biosynthesis; L-histidine from 5-phospho-alpha-D-ribose 1-diphosphate: step 6/9. This Leuconostoc mesenteroides subsp. mesenteroides (strain ATCC 8293 / DSM 20343 / BCRC 11652 / CCM 1803 / JCM 6124 / NCDO 523 / NBRC 100496 / NCIMB 8023 / NCTC 12954 / NRRL B-1118 / 37Y) protein is Imidazoleglycerol-phosphate dehydratase.